The sequence spans 105 residues: Putative membrane protein insertion efficiency factor (105 aa).

A disordered region spans residues 68-105 (FHPGGLDPVPPRRNESGTEISDARPGSDGEASPGAPGL). Positions 77–94 (PPRRNESGTEISDARPGS) are enriched in basic and acidic residues.

This sequence belongs to the UPF0161 family.

Its subcellular location is the cell membrane. Functionally, could be involved in insertion of integral membrane proteins into the membrane. The protein is Putative membrane protein insertion efficiency factor of Thermobifida fusca (strain YX).